The primary structure comprises 429 residues: Adenylosuccinate synthetase (429 aa).

Residues 12–18 (GDEGKGK) and 40–42 (GHT) contribute to the GTP site. Asp-13 acts as the Proton acceptor in catalysis. The Mg(2+) site is built by Asp-13 and Gly-40. IMP is bound by residues 13–16 (DEGK), 38–41 (NAGH), Thr-128, Arg-142, Gln-223, Thr-238, and Arg-302. Catalysis depends on His-41, which acts as the Proton donor. 298–304 (TTTGRPR) lines the substrate pocket. GTP contacts are provided by residues Arg-304, 330–332 (SID), and 412–414 (SVG).

This sequence belongs to the adenylosuccinate synthetase family. In terms of assembly, homodimer. It depends on Mg(2+) as a cofactor.

It localises to the cytoplasm. The enzyme catalyses IMP + L-aspartate + GTP = N(6)-(1,2-dicarboxyethyl)-AMP + GDP + phosphate + 2 H(+). It participates in purine metabolism; AMP biosynthesis via de novo pathway; AMP from IMP: step 1/2. Functionally, plays an important role in the de novo pathway of purine nucleotide biosynthesis. Catalyzes the first committed step in the biosynthesis of AMP from IMP. This Lysinibacillus sphaericus (strain C3-41) protein is Adenylosuccinate synthetase.